Reading from the N-terminus, the 264-residue chain is Thymidylate synthase (264 aa).

A dUMP-binding site is contributed by R21. H51 contacts (6R)-5,10-methylene-5,6,7,8-tetrahydrofolate. 126–127 (RR) provides a ligand contact to dUMP. The active-site Nucleophile is C146. DUMP is bound by residues 166–169 (RSAD), N177, and 207–209 (HLY). D169 contacts (6R)-5,10-methylene-5,6,7,8-tetrahydrofolate. A (6R)-5,10-methylene-5,6,7,8-tetrahydrofolate-binding site is contributed by A263.

The protein belongs to the thymidylate synthase family. Bacterial-type ThyA subfamily. Homodimer.

It localises to the cytoplasm. The catalysed reaction is dUMP + (6R)-5,10-methylene-5,6,7,8-tetrahydrofolate = 7,8-dihydrofolate + dTMP. The protein operates within pyrimidine metabolism; dTTP biosynthesis. Its function is as follows. Catalyzes the reductive methylation of 2'-deoxyuridine-5'-monophosphate (dUMP) to 2'-deoxythymidine-5'-monophosphate (dTMP) while utilizing 5,10-methylenetetrahydrofolate (mTHF) as the methyl donor and reductant in the reaction, yielding dihydrofolate (DHF) as a by-product. This enzymatic reaction provides an intracellular de novo source of dTMP, an essential precursor for DNA biosynthesis. The polypeptide is Thymidylate synthase (Azotobacter vinelandii (strain DJ / ATCC BAA-1303)).